The sequence spans 144 residues: 3-dehydroquinate dehydratase (144 aa).

The Proton acceptor role is filled by Tyr-22. Substrate is bound by residues Asn-73, His-79, and Asp-86. Residue His-99 is the Proton donor of the active site. Substrate contacts are provided by residues 100-101 (LS) and Arg-110.

This sequence belongs to the type-II 3-dehydroquinase family. In terms of assembly, homododecamer.

The enzyme catalyses 3-dehydroquinate = 3-dehydroshikimate + H2O. The protein operates within metabolic intermediate biosynthesis; chorismate biosynthesis; chorismate from D-erythrose 4-phosphate and phosphoenolpyruvate: step 3/7. Functionally, catalyzes a trans-dehydration via an enolate intermediate. This is 3-dehydroquinate dehydratase from Herpetosiphon aurantiacus (strain ATCC 23779 / DSM 785 / 114-95).